The sequence spans 408 residues: Tyrosine--tRNA ligase (408 aa).

The short motif at 50-59 is the 'HIGH' region element; that stretch reads PTGKDLTLGH. Residues 234-238 carry the 'KMSKS' region motif; that stretch reads KMSKS. Lysine 237 contributes to the ATP binding site. The S4 RNA-binding domain maps to 346–407; sequence MQAARVLFTA…GKRKYGRVVL (62 aa).

Belongs to the class-I aminoacyl-tRNA synthetase family. TyrS type 2 subfamily. Homodimer.

It is found in the cytoplasm. The enzyme catalyses tRNA(Tyr) + L-tyrosine + ATP = L-tyrosyl-tRNA(Tyr) + AMP + diphosphate + H(+). Its function is as follows. Catalyzes the attachment of tyrosine to tRNA(Tyr) in a two-step reaction: tyrosine is first activated by ATP to form Tyr-AMP and then transferred to the acceptor end of tRNA(Tyr). In Symbiobacterium thermophilum (strain DSM 24528 / JCM 14929 / IAM 14863 / T), this protein is Tyrosine--tRNA ligase.